The primary structure comprises 573 residues: Solute carrier family 41 member 2 (573 aa).

Over 1–162 the chain is Extracellular; the sequence is MTHSKGRPVT…KESSGVMALQ (162 aa). Ser137 and Ser138 each carry phosphoserine. A helical membrane pass occupies residues 163 to 183; the sequence is ILVPFLLAGFGTVSAGMVLDI. The Cytoplasmic portion of the chain corresponds to 184–195; it reads VQHWEVFKNVTE. Residues 196-216 traverse the membrane as a helical segment; it reads VFILVPALLGLKGNLEMTLAS. Topologically, residues 217–245 are extracellular; sequence RLSTAVNVGKMDSPIEKWNLIIGNLALKQ. Residues 246–266 form a helical membrane-spanning segment; the sequence is VQATVVGFLAAVAAIILGWIP. The Cytoplasmic segment spans residues 267–282; the sequence is EGKYYLSHSILLCSSS. The helical transmembrane segment at 283 to 303 threads the bilayer; it reads VATAFIASLLQGIIMVGVIVG. Residues 304 to 313 lie on the Extracellular side of the membrane; it reads SKKTGINPDN. The chain crosses the membrane as a helical span at residues 314-334; the sequence is VATPIAASFGDLITLAILAWI. At 335–347 the chain is on the cytoplasmic side; that stretch reads SQGLYSCLETYYY. A helical transmembrane segment spans residues 348–368; the sequence is ISPLVCAFFLALTPIWIIIAA. Over 369–376 the chain is Extracellular; it reads KHPATRTV. Residues 377-397 traverse the membrane as a helical segment; sequence LHSGWEPVITAMVISSIGGLI. Residues 398-406 are Cytoplasmic-facing; the sequence is LDTTVSDPN. A helical transmembrane segment spans residues 407–427; sequence LVGIVVYTPVINGIGGNLVAI. The Extracellular segment spans residues 428-469; sequence QASRISTYLHLHSIPGELPEEPKGCSYPFRTFFGSGVNNKSA. The chain crosses the membrane as a helical span at residues 470–490; it reads QVLLLFVIPGHLIFLYTIHLM. Over 491-498 the chain is Cytoplasmic; it reads KSGHTSLT. The helical transmembrane segment at 499–519 threads the bilayer; the sequence is VVFVVVYLFAAVLQVFTLLWI. At 520-543 the chain is on the extracellular side; that stretch reads ADWMVHRFWRKGKDPDSFSIPYLT. The helical transmembrane segment at 544–564 threads the bilayer; it reads ALGDLLGTALLALSFHFLWLI. The Cytoplasmic portion of the chain corresponds to 565-573; it reads GDRDGDVGD.

This sequence belongs to the SLC41A transporter family.

Its subcellular location is the cell membrane. The enzyme catalyses Mg(2+)(in) = Mg(2+)(out). The catalysed reaction is Mn(2+)(in) = Mn(2+)(out). It catalyses the reaction Co(2+)(in) = Co(2+)(out). It carries out the reaction Ni(2+)(in) = Ni(2+)(out). The enzyme catalyses Fe(2+)(in) = Fe(2+)(out). In terms of biological role, acts as a plasma-membrane magnesium transporter. Can also mediate the transport of other divalent metal cations in an order of Ba(2+) &gt; Ni(2+) &gt; Co(2+) &gt; Fe(2+) &gt; Mn(2+). In Mus musculus (Mouse), this protein is Solute carrier family 41 member 2 (Slc41a2).